The primary structure comprises 91 residues: C-C motif chemokine 5 (91 aa).

A signal peptide spans 1–23; the sequence is MKISAAALTIILTAAALCTPAPA. Cystine bridges form between C33-C57 and C34-C73.

The protein belongs to the intercrine beta (chemokine CC) family. In terms of tissue distribution, T-cell and macrophage specific.

It is found in the secreted. Its function is as follows. Chemoattractant for blood monocytes, memory T-helper cells and eosinophils. Causes the release of histamine from basophils and activates eosinophils. May activate several chemokine receptors including CCR1, CCR3, CCR4 and CCR5. May also be an agonist of the G protein-coupled receptor GPR75. Together with GPR75, may play a role in neuron survival through activation of a downstream signaling pathway involving the PI3, Akt and MAP kinases. By activating GPR75 may also play a role in insulin secretion by islet cells. The polypeptide is C-C motif chemokine 5 (Ccl5) (Mus musculus (Mouse)).